The chain runs to 360 residues: Putative agmatine deiminase (360 aa).

Cys-353 acts as the Amidino-cysteine intermediate in catalysis.

This sequence belongs to the agmatine deiminase family.

The enzyme catalyses agmatine + H2O = N-carbamoylputrescine + NH4(+). This is Putative agmatine deiminase from Vibrio parahaemolyticus serotype O3:K6 (strain RIMD 2210633).